Consider the following 161-residue polypeptide: Regulator of ribonuclease activity A (161 aa).

This sequence belongs to the RraA family. Homotrimer. Binds to both RNA-binding sites in the C-terminal region of Rne and to RhlB.

It localises to the cytoplasm. Globally modulates RNA abundance by binding to RNase E (Rne) and regulating its endonucleolytic activity. Can modulate Rne action in a substrate-dependent manner by altering the composition of the degradosome. Modulates RNA-binding and helicase activities of the degradosome. The protein is Regulator of ribonuclease activity A of Tolumonas auensis (strain DSM 9187 / NBRC 110442 / TA 4).